A 70-amino-acid chain; its full sequence is Cytochrome c oxidase subunit 8B, mitochondrial (70 aa).

The N-terminal 24 residues, 1-24, are a transit peptide targeting the mitochondrion; it reads MLRLAPTVRLLQAPLRGWAVPKAH. At 25-35 the chain is on the mitochondrial matrix side; the sequence is ITAKPAKTPTS. A helical membrane pass occupies residues 36–59; sequence PKEQAIGLSVTFLSFLLPAGWVLY. Topologically, residues 60-70 are mitochondrial intermembrane; sequence HLDNYKKSSAA.

It belongs to the cytochrome c oxidase VIII family. As to quaternary structure, component of the cytochrome c oxidase (complex IV, CIV), a multisubunit enzyme composed of 14 subunits. The complex is composed of a catalytic core of 3 subunits MT-CO1, MT-CO2 and MT-CO3, encoded in the mitochondrial DNA, and 11 supernumerary subunits COX4I1 (or COX4I2), COX5A, COX5B, COX6A2 (or COX6A1), COX6B1 (or COX6B2), COX6C, COX7A1 (or COX7A2), COX7B, COX7C, COX8B and NDUFA4, which are encoded in the nuclear genome. The complex exists as a monomer or a dimer and forms supercomplexes (SCs) in the inner mitochondrial membrane with NADH-ubiquinone oxidoreductase (complex I, CI) and ubiquinol-cytochrome c oxidoreductase (cytochrome b-c1 complex, complex III, CIII), resulting in different assemblies (supercomplex SCI(1)III(2)IV(1) and megacomplex MCI(2)III(2)IV(2)).

Its subcellular location is the mitochondrion inner membrane. It functions in the pathway energy metabolism; oxidative phosphorylation. Component of the cytochrome c oxidase, the last enzyme in the mitochondrial electron transport chain which drives oxidative phosphorylation. The respiratory chain contains 3 multisubunit complexes succinate dehydrogenase (complex II, CII), ubiquinol-cytochrome c oxidoreductase (cytochrome b-c1 complex, complex III, CIII) and cytochrome c oxidase (complex IV, CIV), that cooperate to transfer electrons derived from NADH and succinate to molecular oxygen, creating an electrochemical gradient over the inner membrane that drives transmembrane transport and the ATP synthase. Cytochrome c oxidase is the component of the respiratory chain that catalyzes the reduction of oxygen to water. Electrons originating from reduced cytochrome c in the intermembrane space (IMS) are transferred via the dinuclear copper A center (CU(A)) of subunit 2 and heme A of subunit 1 to the active site in subunit 1, a binuclear center (BNC) formed by heme A3 and copper B (CU(B)). The BNC reduces molecular oxygen to 2 water molecules using 4 electrons from cytochrome c in the IMS and 4 protons from the mitochondrial matrix. This chain is Cytochrome c oxidase subunit 8B, mitochondrial (COX8B), found in Bos taurus (Bovine).